We begin with the raw amino-acid sequence, 303 residues long: MEQAQSLFREGVLSHLEQLEALSYNLAVKQEKQRQEWAALRKNQELVLELRKKRDELKAKIERHKAEIQAFRGREEAGEDHGSAAGTSQQAMLELCVEELKGMLEMHWLTGISGKRTKKGVCVCISTAFEGAYLDSFHLDIALKPSVGISRHSVPPFIPLEQIAKEHLQTDLKKFLSVLFEHLNAYAGRKYQFQQLQSFPGGFVRDAQQGNSLHTVLTFGYNVRVEKQPFCLRAKLLYGGVTRSLPTEAVITCEDNRPSVQEKISSHSSLFCQNPLHRALECISSEDETLNHSSASLLGTHMF.

Residues alanine 38–alanine 77 adopt a coiled-coil conformation.

This sequence belongs to the CENP-O/MCM21 family.

It localises to the nucleus. Its subcellular location is the chromosome. It is found in the centromere. Functionally, probable component of a centromeric complex involved in assembly of kinetochore proteins, mitotic progression and chromosome segregation. This Xenopus tropicalis (Western clawed frog) protein is Centromere protein O (cenpo).